A 483-amino-acid polypeptide reads, in one-letter code: MGQFISFMQEIPIFLQEALNIALVAVSLICIVKGLVNLYRCGLFQLMVFLVLAGRSCSEETFKIGMHTQFQEVSLSLSALLTNQSHELPMLCLANKTHLYLKSGRSSFKINIDSVTVLTRSADVFVHSPKLGSCFESDEEWVVAWWIEAIGHRWDQDPGLLCRNKTKTEGKLIQINISRADGNVHYGWRLKNGLDHIYRGREEPCFEGEQCLIKIQPEDWPTDCKADHTNTFRFLSRSQKSIAVGRTLKAFFSWSLTDPLGNEAPGGYCLEKWMLVASELKCFGNTAIAKCNQNHDSEFCDMLRLFDYNKNAIKTLNEETKTRVNVLSHTINALISDNLLMKNKIRELMSVPYCNYTRFWYVNHTLSGQHSLPRCWMIRNNSYLNSSEFRNEWILESDFLISEMLSKEYSERQGRTPITLVDICFWSTVFFTSTLFLHLIGFPTHEHIRGEGCPLPHRLNSMGGCRCGKYLPLKKPTIWHRRH.

Gly-2 carries N-myristoyl glycine; by host lipidation. Topologically, residues 2 to 17 are extracellular; sequence GQFISFMQEIPIFLQE. The helical transmembrane segment at 18 to 32 threads the bilayer; the sequence is ALNIALVAVSLICIV. A topological domain (cytoplasmic) is located at residue Lys-33. Residues 34–53 traverse the membrane as a helical segment; the sequence is GLVNLYRCGLFQLMVFLVLA. 2 consecutive stretches face the extracellular side: residues 54-58 and 59-422; these read GRSCS and EETF…TLVD. Position 57 (Cys-57) interacts with Zn(2+). Asn-83 and Asn-95 each carry an N-linked (GlcNAc...) asparagine; by host glycan. Cystine bridges form between Cys-92/Cys-224, Cys-134/Cys-162, Cys-205/Cys-211, Cys-269/Cys-282, Cys-291/Cys-300, and Cys-354/Cys-375. Residues Asn-164 and Asn-176 are each glycosylated (N-linked (GlcNAc...) asparagine; by host). Residues Asn-355, Asn-363, Asn-380, and Asn-385 are each glycosylated (N-linked (GlcNAc...) asparagine; by host). Residues 423–443 form a helical membrane-spanning segment; sequence ICFWSTVFFTSTLFLHLIGFP. Residues 444-483 lie on the Cytoplasmic side of the membrane; it reads THEHIRGEGCPLPHRLNSMGGCRCGKYLPLKKPTIWHRRH. His-445, His-447, Cys-453, His-457, Cys-465, Cys-467, and His-483 together coordinate Zn(2+).

The protein belongs to the arenaviridae GPC protein family. Homotetramer; disulfide-linked. In terms of assembly, homotetramer. GP2 homotetramers bind through ionic interactions with GP1 homotetramers to form the GP complex together with the stable signal peptide. The GP-C polyprotein interacts with the host protease MBTPS1/SKI-1 resulting in the polyprotein processing. In terms of processing, specific enzymatic cleavages in vivo yield mature proteins. GP-C polyprotein is cleaved in the endoplasmic reticulum by the host protease MBTPS1. Only cleaved glycoprotein is incorporated into virions. Post-translationally, the SSP remains stably associated with the GP complex following cleavage by signal peptidase and plays crucial roles in the trafficking of GP through the secretory pathway. Myristoylation is necessary for GP2-mediated fusion activity.

It is found in the virion membrane. The protein localises to the host endoplasmic reticulum membrane. It localises to the host Golgi apparatus membrane. The protein resides in the host cell membrane. Functionally, class I viral fusion protein that directs fusion of viral and host endosomal membranes, leading to delivery of the nucleocapsid into the cytoplasm. Membrane fusion is mediated by irreversible conformational changes induced upon acidification in the endosome. In terms of biological role, stable signal peptide (SSP): cleaved and functions as a signal peptide. In addition, it is also retained as the third component of the GP complex. The SSP is required for efficient glycoprotein expression, post-translational maturation cleavage of GP1 and GP2, glycoprotein transport to the cell surface plasma membrane, formation of infectious virus particles, and acid pH-dependent glycoprotein-mediated cell fusion. Its function is as follows. Interacts with the host receptor. This chain is Pre-glycoprotein polyprotein GP complex, found in Artibeus (neotropical fruit bats).